The following is a 153-amino-acid chain: Putative transmembrane protein INAFM2 (153 aa).

Over residues 1 to 23 (MKERDAAPAERGKPATYTGDKKA) the composition is skewed to basic and acidic residues. Positions 1-24 (MKERDAAPAERGKPATYTGDKKAK) are disordered. Residues 36-56 (LATVFAYVLSVSLAAIVLAVY) form a helical membrane-spanning segment. A disordered region spans residues 66-153 (AGTSGGAAGP…EETAAAPGSR (88 aa)). Residues 79–101 (GSNATGPSGTSGAAAAGPNTTGS) show a composition bias toward low complexity. A compositionally biased stretch (pro residues) spans 118 to 131 (PAPPEPPADSPPAG).

The protein localises to the membrane. This Homo sapiens (Human) protein is Putative transmembrane protein INAFM2.